A 758-amino-acid polypeptide reads, in one-letter code: Thiosulfate reductase molybdopterin-containing subunit PhsA (758 aa).

The tat-type signal signal peptide spans 1–30 (MSISRRSFLQGVGIGCSACALGAFPPGALA). The 4Fe-4S Mo/W bis-MGD-type domain maps to 41–97 (TTLTPSLCEMCSFRCPIQAQVVNNKTVFIQGNPSAPQQGTRICARGGSGVSLVNDPQ). [4Fe-4S] cluster is bound by residues cysteine 48, cysteine 51, cysteine 55, and cysteine 83.

It belongs to the prokaryotic molybdopterin-containing oxidoreductase family. As to quaternary structure, composed of three subunits: PhsA, PhsB and PhsC. [4Fe-4S] cluster is required as a cofactor. The cofactor is Mo-bis(molybdopterin guanine dinucleotide). In terms of processing, predicted to be exported by the Tat system. The position of the signal peptide cleavage has not been experimentally proven.

Its subcellular location is the periplasm. It carries out the reaction a quinone + hydrogen sulfide + sulfite + 2 H(+) = thiosulfate + a quinol. In terms of biological role, component of the PhsABC thiosulfate reductase that catalyzes the reduction of thiosulfate to sulfite and hydrogen sulfide, with menaquinol as the sole electron donor. Proton motive force (PMF) is required to drive transmembrane electron transfer within the reductase. The PhsA subunit contains the active site molybdenum-bis(molybdopterin guanine dinucleotide) (Mo-bis-MGD) cofactor. The chain is Thiosulfate reductase molybdopterin-containing subunit PhsA from Salmonella typhimurium (strain LT2 / SGSC1412 / ATCC 700720).